The chain runs to 128 residues: Sm-like protein LSM1A (128 aa).

Positions 10 to 85 (FFSTSLAAYL…VVLIGELDVE (76 aa)) constitute a Sm domain.

The protein belongs to the snRNP Sm proteins family. In terms of assembly, component of the heptameric LSM1-LSM7 complex that forms a seven-membered ring structure with a donut shape. The LSM subunits are arranged in the order LSM1, LSM2, LSM3, LSM6, LSM5, LSM7 and LSM4. LSM1A subunit interacts only with its two neighboring subunits, LSM2 and LSM4. In terms of tissue distribution, expressed in roots, leaves, stems, flowers and siliques.

Its subcellular location is the cytoplasm. It localises to the P-body. Functionally, component of the cytoplasmic LSM1-LSM7 complex which is involved in mRNA degradation by promoting decapping and leading to accurate 5'-3' mRNA decay. LSM1A and LSM1B are essential for the formation of the cytoplasmic LSM1-LSM7 complex which regulates developmental gene expression by the decapping of specific development-related transcripts. Required for P-body formation during heat stress. This Arabidopsis thaliana (Mouse-ear cress) protein is Sm-like protein LSM1A.